The chain runs to 149 residues: UPF0260 protein Avin_32930 (149 aa).

The protein belongs to the UPF0260 family.

The chain is UPF0260 protein Avin_32930 from Azotobacter vinelandii (strain DJ / ATCC BAA-1303).